We begin with the raw amino-acid sequence, 229 residues long: NAD(P)H-hydrate epimerase (229 aa).

Residues 9–216 (AISVDEELFN…KLEEKYAMNL (208 aa)) form the YjeF N-terminal domain. 59 to 63 (NNGGD) is a (6S)-NADPHX binding site. Residues Asn-60 and Asp-124 each contribute to the K(+) site. Residues 128-134 (GFSFKPP) and Asp-157 contribute to the (6S)-NADPHX site. Ser-160 contributes to the K(+) binding site.

It belongs to the NnrE/AIBP family. K(+) serves as cofactor.

The catalysed reaction is (6R)-NADHX = (6S)-NADHX. The enzyme catalyses (6R)-NADPHX = (6S)-NADPHX. Functionally, catalyzes the epimerization of the S- and R-forms of NAD(P)HX, a damaged form of NAD(P)H that is a result of enzymatic or heat-dependent hydration. This is a prerequisite for the S-specific NAD(P)H-hydrate dehydratase to allow the repair of both epimers of NAD(P)HX. The polypeptide is NAD(P)H-hydrate epimerase (Anopheles gambiae (African malaria mosquito)).